We begin with the raw amino-acid sequence, 549 residues long: Cytoplasmic trehalase (549 aa).

Residues R168, 175-176, N212, 221-223, 292-294, and G324 each bind substrate; these read WD, RSQ, and RDE. Residues D326 and E509 each act as proton donor/acceptor in the active site. Substrate is bound at residue E525.

The protein belongs to the glycosyl hydrolase 37 family. As to quaternary structure, monomer.

The protein localises to the cytoplasm. It carries out the reaction alpha,alpha-trehalose + H2O = alpha-D-glucose + beta-D-glucose. Its pathway is glycan degradation; trehalose degradation; D-glucose from alpha,alpha-trehalose: step 1/1. Its function is as follows. Hydrolyzes trehalose to glucose. Could be involved, in cells returning to low osmolarity conditions, in the utilization of the accumulated cytoplasmic trehalose, which was synthesized in response to high osmolarity. The polypeptide is Cytoplasmic trehalase (Salmonella arizonae (strain ATCC BAA-731 / CDC346-86 / RSK2980)).